Here is a 15639-residue protein sequence, read N- to C-terminus: FR901469 synthetase (15639 aa).

One can recognise a Carrier 1 domain in the interval 5–81; that stretch reads HTSDGLRKLL…DLVDKIIEQQ (77 aa). At Ser-42 the chain carries O-(pantetheine 4'-phosphoryl)serine. Residues 82-94 show a composition bias toward acidic residues; that stretch reads LEEEEEDDDSLDN. Residues 82–105 are disordered; it reads LEEEEEDDDSLDNESERDHSQKDL. The interval 140–553 is condensation 1; the sequence is PCLSMQEGCL…RDFLPLTEDD (414 aa). An adenylation 1 region spans residues 579 to 971; sequence TISKQPDAVA…LGRRDTQVKI (393 aa). The region spanning 1108–1184 is the Carrier 2 domain; sequence TPATAIEKEL…ELALVARSTT (77 aa). At Ser-1145 the chain carries O-(pantetheine 4'-phosphoryl)serine. The epimerase 1 stretch occupies residues 1219 to 1626; it reads RSSNRFNQSV…TITHLVKRLA (408 aa). A condensation 2 region spans residues 1667–2097; it reads EDVLPCTPIQ…LGNLSLLTNN (431 aa). The segment at 2122–2518 is adenylation 2; sequence QEAAKEYTNA…GRRDNQIKIR (397 aa). The Carrier 3 domain occupies 2654–2730; the sequence is VPATALEKQL…ELALKAKSTT (77 aa). O-(pantetheine 4'-phosphoryl)serine is present on Ser-2691. Residues 2761-3176 form an epimerase 2 region; that stretch reads VSAGEHRYNQ…TELLHRLEQM (416 aa). The interval 3215 to 3640 is condensation 3; the sequence is QDIYPCSPTQ…DDLIMMSPED (426 aa). Residues 3669-4059 form an adenylation 3 region; it reads TQPHAPAVAA…MGRIDSQIKI (391 aa). The Carrier 4 domain maps to 4193–4269; it reads PPSNDAERMV…QLAAIVTQRG (77 aa). At Ser-4230 the chain carries O-(pantetheine 4'-phosphoryl)serine. The tract at residues 4316-4714 is condensation 4; sequence EDVYPCTPLQ…ILAHGTGLEE (399 aa). Residues 4756-5149 form an adenylation 4 region; sequence TEAASTRPDA…GRLDTQAKLR (394 aa). The Carrier 5 domain occupies 5284-5360; it reads EPATIMERQL…DLASHIDHHT (77 aa). An O-(pantetheine 4'-phosphoryl)serine modification is found at Ser-5321. Positions 5402–5802 are condensation 5; the sequence is EDIYPCTPLQ…TVFAQLCDSS (401 aa). The adenylation 5 stretch occupies residues 5847–6238; it reads KYPNEPAVHA…LGRRDSQMKV (392 aa). Residues 6375-6451 enclose the Carrier 6 domain; that stretch reads QPSTTAEIKL…DMAKIVEEHV (77 aa). The residue at position 6412 (Ser-6412) is an O-(pantetheine 4'-phosphoryl)serine. The condensation 6 stretch occupies residues 6494-6889; it reads EDVYPATPLQ…RFAKVYQQLS (396 aa). The interval 6952–7335 is adenylation 6; the sequence is WDGSMTYAEL…GRRDTQIKIR (384 aa). Positions 7473-7546 constitute a Carrier 7 domain; that stretch reads TAMEEQLRTV…QLALLASTDE (74 aa). Ser-7507 bears the O-(pantetheine 4'-phosphoryl)serine mark. An epimerase 3 region spans residues 7580–7992; it reads MGENRYNQSV…SKTLEELTTQ (413 aa). The segment at 8034 to 8459 is condensation 7; the sequence is EDVFPASPMQ…QRMRNISLAS (426 aa). An adenylation 7 region spans residues 8486 to 8882; that stretch reads QKSVHARPDA…GRRDTQVKIR (397 aa). A Carrier 8 domain is found at 9015 to 9091; it reads QPATDAERQL…DLAKTIQDSE (77 aa). An O-(pantetheine 4'-phosphoryl)serine modification is found at Ser-9052. Positions 9136–9535 are condensation 8; that stretch reads EDVYPCTPLQ…FAAIFRQLCD (400 aa). The tract at residues 9583–9974 is adenylation 8; the sequence is KNPHAIAVNA…GRRDNQMKIR (392 aa). The Carrier 9 domain maps to 10110 to 10186; it reads EPATPMEMQL…GLAALIQKQI (77 aa). Residue Ser-10147 is modified to O-(pantetheine 4'-phosphoryl)serine. The segment at 10186-10208 is disordered; that stretch reads IDEEEEYDDSEEEEEDDEEEVRE. Acidic residues predominate over residues 10187-10206; it reads DEEEEYDDSEEEEEDDEEEV. The condensation 9 stretch occupies residues 10240–10662; the sequence is VEDVYPCTPL…VLSETDKTKI (423 aa). An adenylation 9 region spans residues 10683-11082; that stretch reads KQAIERPNAP…GRRDTQIKIR (400 aa). Residues 11217–11293 enclose the Carrier 10 domain; sequence EPATGMERHL…DLARETESQG (77 aa). Ser-11254 carries the O-(pantetheine 4'-phosphoryl)serine modification. The condensation 10 stretch occupies residues 11329-11725; that stretch reads EDVYPCTPLQ…ETIFQQLSSV (397 aa). The tract at residues 11770 to 12165 is adenylation 10; it reads FKRTADKQPE…GRRDTQIKVR (396 aa). In terms of domain architecture, Carrier 11 spans 12298–12374; the sequence is EPSTEMERRI…DLAAAVQGRI (77 aa). Ser-12335 is subject to O-(pantetheine 4'-phosphoryl)serine. The tract at residues 12418–12830 is condensation 11; that stretch reads EDVYPATPLQ…IQDIEMVSEQ (413 aa). The interval 12861–13249 is adenylation 11; the sequence is SRADEIAICA…GRRDTQIKIR (389 aa). The Carrier 12 domain occupies 13383 to 13459; sequence MPGTVQEEQL…QLGQKVKEAV (77 aa). Ser-13420 is subject to O-(pantetheine 4'-phosphoryl)serine. Positions 13476-13901 are epimerase 4; the sequence is APIQQMFFEQ…LKDMTSTLLQ (426 aa). Positions 13940-14369 are condensation 12; sequence EDILPCSPIQ…SIVGEHDLQQ (430 aa). Residues 14390–14789 are adenylation 12; that stretch reads RDAAHRTPDA…GRGDGQIKIR (400 aa). The Carrier 13 domain occupies 14916–14992; that stretch reads LPASADEGAL…DMASVASAAR (77 aa). An O-(pantetheine 4'-phosphoryl)serine modification is found at Ser-14953. The segment at 15062-15433 is condensation 13; sequence QHAVDLAALK…DIMVRLASQQ (372 aa). 2 disordered regions span residues 15434–15511 and 15617–15639; these read EGTV…ENRQ and VQTN…KGHI. Residues 15455-15472 are compositionally biased toward low complexity; the sequence is NGTNGSNGDGTDAANGIG. Basic and acidic residues predominate over residues 15482 to 15494; sequence AVEKSSGDAEVEK. The span at 15495–15511 shows a compositional bias: polar residues; the sequence is VSTNGHADNNTSAENRQ.

It belongs to the NRP synthetase family.

It participates in antifungal biosynthesis. Its function is as follows. Nonribosomal peptide synthetase; part of the gene cluster that mediates the biosynthesis of the antifungal antibiotic FR901469, an inhibitor of beta-1,3-glucansynthase, exerting antifungal activity against the pathogenes Candida albicans and Aspergillus fumigatus. FR901469 is a cyclic depsipeptide containing 12 amino acid residues and a fatty acid chain. The NRPS frbI contains 12 modules responsible for the formation of the depsipeptide backbone which is denoted as Acyl-Thr-Ala-Tyr-Val-4OHPro-Thr-Thr-3OHPro-threo3OHGln-Gly-Thr-Orn-OH (C71H116N14O23). The PKS frbB is probably involved in the production of the hydrocarbon chain, and the acyl-CoA ligase frbC might be involved in the transport of the chain to the peptide ptoduct of frbI. Because FR901469 contains 3 hydroxylated amino acid residues, the 3 oxygenases frbA, frbH, and frbJ might be participating in amino acid hydroxylation. As no thioesterase domains were detected in frbI or frbB, the thioesterases frbD and frbE may instead release and cyclize the products of the NRPS and PKS, respectively. This is FR901469 synthetase from Dothideomycetidae sp. (strain 11243) (Fungal sp. (strain No.11243)).